A 526-amino-acid chain; its full sequence is Fumitremorgin C synthase (526 aa).

The helical transmembrane segment at 4-24 (LPLSPAVLFLIIVLPILYLWI) threads the bilayer. C443 provides a ligand contact to heme.

Belongs to the cytochrome P450 family. Heme is required as a cofactor.

It is found in the membrane. It carries out the reaction tryprostatin A + reduced [NADPH--hemoprotein reductase] + O2 = fumitremorgin C + oxidized [NADPH--hemoprotein reductase] + 2 H2O + H(+). It participates in mycotoxin biosynthesis. Its function is as follows. Cytochrome P450 monooxygenase; part of the gene cluster that mediates the biosynthesis of fumitremorgins, indole alkaloids that carry not only intriguing chemical structures, but also interesting biological and pharmacological activities. The biosynthesis of fumitremorgin-type alkaloids begins by condensation of the two amino acids L-tryptophan and L-proline to brevianamide F, catalyzed by the non-ribosomal peptide synthetase ftmA. Brevianamide F is then prenylated by the prenyltransferase ftmPT1/ftmB in the presence of dimethylallyl diphosphate, resulting in the formation of tryprostatin B. The three cytochrome P450 monooxygenases, ftmP450-1/ftmC, ftmP450-2/ftmE and ftmP450-3/FtmG, are responsible for the conversion of tryprostatin B to 6-hydroxytryprostatin B, tryprostatin A to fumitremorgin C and fumitremorgin C to 12,13-dihydroxyfumitremorgin C, respectively. The putative methyltransferase ftmMT/ftmD is expected for the conversion of 6-hydroxytryprostatin B to tryprostatin A. FtmPT2/FtmH catalyzes the prenylation of 12,13-dihydroxyfumitre-morgin C in the presence of dimethylallyl diphosphate, resulting in the formation of fumitremorgin B. Fumitremorgin B is further converted to verruculogen by ftmOx1/ftmF via the insertion of an endoperoxide bond between the two prenyl moieties. In some fungal species, verruculogen is further converted to fumitremorgin A, but the enzymes involved in this step have not been identified yet. The sequence is that of Fumitremorgin C synthase from Aspergillus fumigatus (Neosartorya fumigata).